Consider the following 452-residue polypeptide: Exodeoxyribonuclease 7 large subunit (452 aa).

It belongs to the XseA family. Heterooligomer composed of large and small subunits.

Its subcellular location is the cytoplasm. It catalyses the reaction Exonucleolytic cleavage in either 5'- to 3'- or 3'- to 5'-direction to yield nucleoside 5'-phosphates.. Functionally, bidirectionally degrades single-stranded DNA into large acid-insoluble oligonucleotides, which are then degraded further into small acid-soluble oligonucleotides. The protein is Exodeoxyribonuclease 7 large subunit of Bacillus cereus (strain G9842).